Consider the following 122-residue polypeptide: Small ribosomal subunit protein uS13 (122 aa).

Residues 97 to 122 form a disordered region; sequence PVRGQRTHTNARTRKGPAKAIAGKKK.

The protein belongs to the universal ribosomal protein uS13 family. Part of the 30S ribosomal subunit. Forms a loose heterodimer with protein S19. Forms two bridges to the 50S subunit in the 70S ribosome.

In terms of biological role, located at the top of the head of the 30S subunit, it contacts several helices of the 16S rRNA. In the 70S ribosome it contacts the 23S rRNA (bridge B1a) and protein L5 of the 50S subunit (bridge B1b), connecting the 2 subunits; these bridges are implicated in subunit movement. Contacts the tRNAs in the A and P-sites. In Bartonella quintana (strain Toulouse) (Rochalimaea quintana), this protein is Small ribosomal subunit protein uS13.